Reading from the N-terminus, the 241-residue chain is Chaperone protein HifB (241 aa).

An N-terminal signal peptide occupies residues 1-27 (MGKTMFKKTLLFFTALFFTALCAFSAN).

Belongs to the periplasmic pilus chaperone family.

It is found in the periplasm. In terms of biological role, mediates assembly of pili by forming soluble multimeric complexes with pili subunits as an intermediate step in the assembly process. This protein is involved in type B pili (HifA) assembly. This is Chaperone protein HifB (hifB) from Haemophilus influenzae.